Reading from the N-terminus, the 330-residue chain is Calponin-3 (330 aa).

K23 is modified (N6-acetyllysine). The Calponin-homology (CH) domain occupies Q26 to K130. Residue K158 is modified to N6-methyllysine. 3 Calponin-like repeats span residues I164–Y189, I204–Y229, and I243–Y268. Residues P279–Y330 form a disordered region. The span at D306 to R318 shows a compositional bias: basic and acidic residues.

It belongs to the calponin family.

In terms of biological role, thin filament-associated protein that is implicated in the regulation and modulation of smooth muscle contraction. It is capable of binding to actin, calmodulin and tropomyosin. The interaction of calponin with actin inhibits the actomyosin Mg-ATPase activity. The chain is Calponin-3 (Cnn3) from Mus musculus (Mouse).